The following is a 33-amino-acid chain: Photosystem II reaction center protein Psb30 (33 aa).

A helical transmembrane segment spans residues 5-25 (LIVQLTSLILISIAGPIIIAL).

The protein belongs to the Psb30/Ycf12 family. PSII is composed of 1 copy each of membrane proteins PsbA, PsbB, PsbC, PsbD, PsbE, PsbF, PsbH, PsbI, PsbJ, PsbK, PsbL, PsbM, PsbT, PsbY, PsbZ, Psb30/Ycf12, peripheral proteins of the oxygen-evolving complex and a large number of cofactors. It forms dimeric complexes.

It is found in the plastid. The protein localises to the chloroplast thylakoid membrane. Its function is as follows. A core subunit of photosystem II (PSII), probably helps stabilize the reaction center. This chain is Photosystem II reaction center protein Psb30, found in Euglena myxocylindracea.